We begin with the raw amino-acid sequence, 178 residues long: Mediator of RNA polymerase II transcription subunit 28 (178 aa).

The interval 1-25 (MAAPLGGMFSGQQPGPPQPPPGLLG) is disordered. A coiled-coil region spans residues 109 to 145 (QVIKEDVSELRNELQRKDALVQKHLTKLRHWQQVLED).

Belongs to the Mediator complex subunit 28 family. In terms of assembly, component of the Mediator complex, which is composed of MED1, MED4, MED6, MED7, MED8, MED9, MED10, MED11, MED12, MED13, MED13L, MED14, MED15, MED16, MED17, MED18, MED19, MED20, MED21, MED22, MED23, MED24, MED25, MED26, MED27, MED29, MED30, MED31, CCNC, CDK8 and CDC2L6/CDK11. The MED12, MED13, CCNC and CDK8 subunits form a distinct module termed the CDK8 module. Mediator containing the CDK8 module is less active than Mediator lacking this module in supporting transcriptional activation. Individual preparations of the Mediator complex lacking one or more distinct subunits have been variously termed ARC, CRSP, DRIP, PC2, SMCC and TRAP. Forms a ternary complex with NF2/merlin and GRB2. Binds to actin.

The protein resides in the nucleus. It localises to the cytoplasm. It is found in the membrane. Its function is as follows. Component of the Mediator complex, a coactivator involved in the regulated transcription of nearly all RNA polymerase II-dependent genes. Mediator functions as a bridge to convey information from gene-specific regulatory proteins to the basal RNA polymerase II transcription machinery. Mediator is recruited to promoters by direct interactions with regulatory proteins and serves as a scaffold for the assembly of a functional preinitiation complex with RNA polymerase II and the general transcription factors. May be part of a complex containing NF2/merlin that participates in cellular signaling to the actin cytoskeleton downstream of tyrosine kinase signaling pathways. The chain is Mediator of RNA polymerase II transcription subunit 28 (MED28) from Bos taurus (Bovine).